The chain runs to 341 residues: MLLGMSLEELTTVALRMGMPRFAGKQLAEWIYVRRATDFAEMTNISQANRQKLAEIYDLGRYPWSDVQCSVDGTKKYLFPVGEGRFVESVLIPEGDRATLCISSQVGCKMDCLFCMTGKQGWNGNLSAAEILNQIFSVDEAAELTNLVYMGMGEPLDNTDEVLRSIEALTEPWGMGWSPKRITVSTIGAKGLERFLAESRCHLAVSLHSPFPEERRKLMPGEKAFPIMQTLDRIRAYDFSGQRRVSFEYIVFDGLNDDMRHADELAAILRGIPCRINLIRFHKIPAVSLRSSDTARMEAFRKRMESHGFTCTIRASRGEDIFAACGMLSTSKAESSEEKSS.

The active-site Proton acceptor is Glu-88. The 221-residue stretch at 94–314 (EGDRATLCIS…ESHGFTCTIR (221 aa)) folds into the Radical SAM core domain. The cysteines at positions 101 and 325 are disulfide-linked. [4Fe-4S] cluster is bound by residues Cys-108, Cys-112, and Cys-115. Residues 153–154 (GE), Ser-185, 206–208 (SLH), and His-282 contribute to the S-adenosyl-L-methionine site. The active-site S-methylcysteine intermediate is the Cys-325.

This sequence belongs to the radical SAM superfamily. RlmN family. It depends on [4Fe-4S] cluster as a cofactor.

It localises to the cytoplasm. The enzyme catalyses adenosine(2503) in 23S rRNA + 2 reduced [2Fe-2S]-[ferredoxin] + 2 S-adenosyl-L-methionine = 2-methyladenosine(2503) in 23S rRNA + 5'-deoxyadenosine + L-methionine + 2 oxidized [2Fe-2S]-[ferredoxin] + S-adenosyl-L-homocysteine. It catalyses the reaction adenosine(37) in tRNA + 2 reduced [2Fe-2S]-[ferredoxin] + 2 S-adenosyl-L-methionine = 2-methyladenosine(37) in tRNA + 5'-deoxyadenosine + L-methionine + 2 oxidized [2Fe-2S]-[ferredoxin] + S-adenosyl-L-homocysteine. In terms of biological role, specifically methylates position 2 of adenine 2503 in 23S rRNA and position 2 of adenine 37 in tRNAs. This is Probable dual-specificity RNA methyltransferase RlmN from Porphyromonas gingivalis (strain ATCC BAA-308 / W83).